Reading from the N-terminus, the 581-residue chain is Metal transporter Nramp7.1 (581 aa).

N-linked (GlcNAc...) asparagine glycosylation is found at asparagine 11 and asparagine 19. Transmembrane regions (helical) follow at residues 57-77 (FLSYVGPGFLVSLAYLDPGNL), 90-110 (ELLWVILIGLIFALIIQSLAA), 146-166 (YCLWLLAEIAVIAADIPEGII), 181-201 (LLIGTAFALNILFHIPVWVGV), 224-244 (LLIAVLVFVMAACFFGEMSYV), 270-290 (IALLGALIMPHNLFLHSALVL), and 307-327 (YFLIESGFALFIAFLINLAVI). A glycan (N-linked (GlcNAc...) asparagine) is linked at asparagine 338. Helical transmembrane passes span 370 to 390 (IYAIALLASGQSSTITGTYAG), 409 to 429 (LVTRCIAIAPSLVVSIIGGSS), 434 to 454 (LIIIASVLQMILSFELPFALI), 473 to 493 (IYIIVISWILGLGIIGVNIYY), and 513 to 533 (VFIGIIVFPLMAIYILAVIYL). A disordered region spans residues 551–581 (PQQQANMENGLGPEMERVPYREDLADIPLPE). The span at 564–574 (EMERVPYREDL) shows a compositional bias: basic and acidic residues.

It belongs to the NRAMP (TC 2.A.55) family.

It localises to the membrane. In terms of biological role, probable divalent metal transporter. This chain is Metal transporter Nramp7.1, found in Populus trichocarpa (Western balsam poplar).